The chain runs to 243 residues: 2-C-methyl-D-erythritol 4-phosphate cytidylyltransferase (243 aa).

It belongs to the IspD/TarI cytidylyltransferase family. IspD subfamily.

It catalyses the reaction 2-C-methyl-D-erythritol 4-phosphate + CTP + H(+) = 4-CDP-2-C-methyl-D-erythritol + diphosphate. Its pathway is isoprenoid biosynthesis; isopentenyl diphosphate biosynthesis via DXP pathway; isopentenyl diphosphate from 1-deoxy-D-xylulose 5-phosphate: step 2/6. Catalyzes the formation of 4-diphosphocytidyl-2-C-methyl-D-erythritol from CTP and 2-C-methyl-D-erythritol 4-phosphate (MEP). The chain is 2-C-methyl-D-erythritol 4-phosphate cytidylyltransferase from Pelodictyon phaeoclathratiforme (strain DSM 5477 / BU-1).